The primary structure comprises 46 residues: Diuretic hormone (46 aa).

Isoleucine 46 carries the isoleucine amide modification.

The protein belongs to the sauvagine/corticotropin-releasing factor/urotensin I family.

The protein localises to the secreted. Regulation of fluid secretion. Stimulates primary urine secretion by Malpighian tubules and causes a dose-dependent stimulation of cAMP levels in the tubules. This Periplaneta americana (American cockroach) protein is Diuretic hormone.